Reading from the N-terminus, the 468-residue chain is Protein NEN1 (468 aa).

Residues 11-172 enclose the Exonuclease domain; that stretch reads FFDVETTVPK…DDVRMNLEVL (162 aa). Mg(2+) contacts are provided by Asp13 and Glu15. His159 (proton donor/acceptor) is an active-site residue. Position 164 (Asp164) interacts with Mg(2+).

Mg(2+) is required as a cofactor. In terms of tissue distribution, expressed in the sieve elements and phloem pole pericycle cells.

Its subcellular location is the cytoplasm. The protein localises to the nucleus. Its function is as follows. Probable exonuclease involved in enuclation of sieve elements. This is Protein NEN1 from Arabidopsis thaliana (Mouse-ear cress).